Consider the following 322-residue polypeptide: Ribosome biogenesis protein RLP7 (322 aa).

Residues 1-16 (MSSTQDSKAQTLNSNP) are compositionally biased toward polar residues. The tract at residues 1 to 52 (MSSTQDSKAQTLNSNPEILLRKRRNADRTRIERQELAKKKREEQIKKKRSNK) is disordered. S2 carries the N-acetylserine modification. S14 carries the post-translational modification Phosphoserine. Over residues 26-45 (ADRTRIERQELAKKKREEQI) the composition is skewed to basic and acidic residues. T120 is subject to Phosphothreonine. Position 278 is a phosphoserine (S278).

This sequence belongs to the universal ribosomal protein uL30 family.

It localises to the nucleus. It is found in the nucleolus. Functionally, involved in the biogenesis of the 60S ribosomal subunit. May act as a specificity factor that binds precursor rRNAs and tethers the enzymes that carry out the early 5' to 3' exonucleolytic reactions that generate the mature rRNAs. This chain is Ribosome biogenesis protein RLP7 (RLP7), found in Saccharomyces cerevisiae (strain ATCC 204508 / S288c) (Baker's yeast).